Consider the following 145-residue polypeptide: Large ribosomal subunit protein uL11 (145 aa).

This sequence belongs to the universal ribosomal protein uL11 family. In terms of assembly, part of the ribosomal stalk of the 50S ribosomal subunit. Interacts with L10 and the large rRNA to form the base of the stalk. L10 forms an elongated spine to which L12 dimers bind in a sequential fashion forming a multimeric L10(L12)X complex. One or more lysine residues are methylated.

Its function is as follows. Forms part of the ribosomal stalk which helps the ribosome interact with GTP-bound translation factors. The sequence is that of Large ribosomal subunit protein uL11 from Coxiella burnetii (strain Dugway 5J108-111).